A 315-amino-acid chain; its full sequence is Aspartate carbamoyltransferase catalytic subunit (315 aa).

The carbamoyl phosphate site is built by arginine 54 and threonine 55. Residue lysine 82 participates in L-aspartate binding. 3 residues coordinate carbamoyl phosphate: arginine 104, histidine 134, and glutamine 137. Residues arginine 174 and arginine 229 each coordinate L-aspartate. Carbamoyl phosphate contacts are provided by glycine 270 and proline 271.

Belongs to the aspartate/ornithine carbamoyltransferase superfamily. ATCase family. In terms of assembly, heterododecamer (2C3:3R2) of six catalytic PyrB chains organized as two trimers (C3), and six regulatory PyrI chains organized as three dimers (R2).

It carries out the reaction carbamoyl phosphate + L-aspartate = N-carbamoyl-L-aspartate + phosphate + H(+). Its pathway is pyrimidine metabolism; UMP biosynthesis via de novo pathway; (S)-dihydroorotate from bicarbonate: step 2/3. Catalyzes the condensation of carbamoyl phosphate and aspartate to form carbamoyl aspartate and inorganic phosphate, the committed step in the de novo pyrimidine nucleotide biosynthesis pathway. The chain is Aspartate carbamoyltransferase catalytic subunit from Leifsonia xyli subsp. xyli (strain CTCB07).